Reading from the N-terminus, the 101-residue chain is Phosphoribosyl-AMP cyclohydrolase (101 aa).

D71 serves as a coordination point for Mg(2+). C72 serves as a coordination point for Zn(2+). Residues D73 and D75 each contribute to the Mg(2+) site. Residues C88 and C95 each coordinate Zn(2+).

It belongs to the PRA-CH family. In terms of assembly, homodimer. The cofactor is Mg(2+). Requires Zn(2+) as cofactor.

The protein localises to the cytoplasm. The catalysed reaction is 1-(5-phospho-beta-D-ribosyl)-5'-AMP + H2O = 1-(5-phospho-beta-D-ribosyl)-5-[(5-phospho-beta-D-ribosylamino)methylideneamino]imidazole-4-carboxamide. The protein operates within amino-acid biosynthesis; L-histidine biosynthesis; L-histidine from 5-phospho-alpha-D-ribose 1-diphosphate: step 3/9. Catalyzes the hydrolysis of the adenine ring of phosphoribosyl-AMP. In Bacillus cereus (strain ZK / E33L), this protein is Phosphoribosyl-AMP cyclohydrolase.